The sequence spans 277 residues: Proteasome subunit beta type-7 (277 aa).

The propeptide at 1–43 (MAAVSVFQAPVGGFSFDNCRRNAVLEADFAKKGFKLPKARKTG) is removed in mature form. Residue T44 is the Nucleophile of the active site.

Belongs to the peptidase T1B family. As to quaternary structure, the 26S proteasome consists of a 20S proteasome core and two 19S regulatory subunits. The 20S proteasome core is a barrel-shaped complex made of 28 subunits that are arranged in four stacked rings. The two outer rings are each formed by seven alpha subunits, and the two inner rings are formed by seven beta subunits. The proteolytic activity is exerted by three beta-subunits PSMB5, PSMB6 and PSMB7.

The protein resides in the cytoplasm. The protein localises to the nucleus. The catalysed reaction is Cleavage of peptide bonds with very broad specificity.. In terms of biological role, component of the 20S core proteasome complex involved in the proteolytic degradation of most intracellular proteins. This complex plays numerous essential roles within the cell by associating with different regulatory particles. Associated with two 19S regulatory particles, forms the 26S proteasome and thus participates in the ATP-dependent degradation of ubiquitinated proteins. The 26S proteasome plays a key role in the maintenance of protein homeostasis by removing misfolded or damaged proteins that could impair cellular functions, and by removing proteins whose functions are no longer required. Associated with the PA200 or PA28, the 20S proteasome mediates ubiquitin-independent protein degradation. This type of proteolysis is required in several pathways including spermatogenesis (20S-PA200 complex) or generation of a subset of MHC class I-presented antigenic peptides (20S-PA28 complex). Within the 20S core complex, PSMB7 displays a trypsin-like activity. The protein is Proteasome subunit beta type-7 (Psmb7) of Rattus norvegicus (Rat).